Here is a 353-residue protein sequence, read N- to C-terminus: Photosystem II protein D1 (353 aa).

The residue at position 2 (threonine 2) is an N-acetylthreonine. Threonine 2 bears the Phosphothreonine mark. 3 helical membrane-spanning segments follow: residues 29–46 (YIGWFGVLMIPTLLTATS), 118–133 (HFLLGVACYMGREWEL), and 142–156 (WIAVAYSAPVAAATA). Position 118 (histidine 118) interacts with chlorophyll a. Tyrosine 126 lines the pheophytin a pocket. Aspartate 170 and glutamate 189 together coordinate [CaMn4O5] cluster. A helical membrane pass occupies residues 197 to 218 (FHMLGVAGVFGGSLFSAMHGSL). Residue histidine 198 coordinates chlorophyll a. Residues histidine 215 and 264–265 (SF) each bind a quinone. Histidine 215 is a binding site for Fe cation. Histidine 272 contacts Fe cation. The helical transmembrane segment at 274–288 (FLAAWPVVGIWFTAL) threads the bilayer. Positions 332, 333, 342, and 344 each coordinate [CaMn4O5] cluster. The propeptide occupies 345-353 (AVEAPSTNG).

The protein belongs to the reaction center PufL/M/PsbA/D family. As to quaternary structure, PSII is composed of 1 copy each of membrane proteins PsbA, PsbB, PsbC, PsbD, PsbE, PsbF, PsbH, PsbI, PsbJ, PsbK, PsbL, PsbM, PsbT, PsbX, PsbY, PsbZ, Psb30/Ycf12, at least 3 peripheral proteins of the oxygen-evolving complex and a large number of cofactors. It forms dimeric complexes. It depends on The D1/D2 heterodimer binds P680, chlorophylls that are the primary electron donor of PSII, and subsequent electron acceptors. It shares a non-heme iron and each subunit binds pheophytin, quinone, additional chlorophylls, carotenoids and lipids. D1 provides most of the ligands for the Mn4-Ca-O5 cluster of the oxygen-evolving complex (OEC). There is also a Cl(-1) ion associated with D1 and D2, which is required for oxygen evolution. The PSII complex binds additional chlorophylls, carotenoids and specific lipids. as a cofactor. In terms of processing, tyr-161 forms a radical intermediate that is referred to as redox-active TyrZ, YZ or Y-Z. C-terminally processed by CTPA; processing is essential to allow assembly of the oxygen-evolving complex and thus photosynthetic growth.

The protein localises to the plastid. The protein resides in the chloroplast thylakoid membrane. It carries out the reaction 2 a plastoquinone + 4 hnu + 2 H2O = 2 a plastoquinol + O2. In terms of biological role, photosystem II (PSII) is a light-driven water:plastoquinone oxidoreductase that uses light energy to abstract electrons from H(2)O, generating O(2) and a proton gradient subsequently used for ATP formation. It consists of a core antenna complex that captures photons, and an electron transfer chain that converts photonic excitation into a charge separation. The D1/D2 (PsbA/PsbD) reaction center heterodimer binds P680, the primary electron donor of PSII as well as several subsequent electron acceptors. The sequence is that of Photosystem II protein D1 from Oenothera parviflora (Small-flowered evening primrose).